A 269-amino-acid polypeptide reads, in one-letter code: Shikimate dehydrogenase (NADP(+)) (269 aa).

Shikimate-binding positions include 17-19 (SKS) and Thr64. The active-site Proton acceptor is the Lys68. An NADP(+)-binding site is contributed by Asp80. Positions 89 and 105 each coordinate shikimate. Residues 130–134 (GAGGA), 154–159 (NRTRAK), and Met213 contribute to the NADP(+) site. Tyr215 serves as a coordination point for shikimate. Gly237 contributes to the NADP(+) binding site.

The protein belongs to the shikimate dehydrogenase family. As to quaternary structure, homodimer.

It catalyses the reaction shikimate + NADP(+) = 3-dehydroshikimate + NADPH + H(+). Its pathway is metabolic intermediate biosynthesis; chorismate biosynthesis; chorismate from D-erythrose 4-phosphate and phosphoenolpyruvate: step 4/7. Functionally, involved in the biosynthesis of the chorismate, which leads to the biosynthesis of aromatic amino acids. Catalyzes the reversible NADPH linked reduction of 3-dehydroshikimate (DHSA) to yield shikimate (SA). The protein is Shikimate dehydrogenase (NADP(+)) of Neisseria meningitidis serogroup C (strain 053442).